We begin with the raw amino-acid sequence, 519 residues long: Halolysin (519 aa).

Residues Met-1–Val-27 constitute a signal peptide (tat-type signal). The propeptide occupies Thr-28–Leu-116. The Peptidase S8 domain occupies Gln-127–Val-400. Residues Asp-154, His-193, and Ser-347 each act as charge relay system in the active site. Residues Ser-386 to Ser-425 form a disordered region. A compositionally biased stretch (gly residues) spans Gly-405–Ser-415.

Belongs to the peptidase S8 family. In terms of processing, predicted to be exported by the Tat system. The position of the signal peptide cleavage has not been experimentally proven.

It is found in the secreted. Its function is as follows. Probable secreted halophilic serine protease showing proteolytic activity toward the protease general substrate azocasein. This chain is Halolysin (hly), found in Haloferax mediterranei (strain ATCC 33500 / DSM 1411 / JCM 8866 / NBRC 14739 / NCIMB 2177 / R-4) (Halobacterium mediterranei).